The chain runs to 247 residues: Uridylate kinase (247 aa).

15–18 (KLSG) is an ATP binding site. The segment at 23 to 28 (GEEGFG) is involved in allosteric activation by GTP. A UMP-binding site is contributed by Gly57. Residues Gly58 and Arg62 each coordinate ATP. Residues Asp77 and 138–145 (TGNPFCTT) contribute to the UMP site. Residues Thr165, Tyr171, and Asp174 each coordinate ATP.

It belongs to the UMP kinase family. In terms of assembly, homohexamer.

It localises to the cytoplasm. The enzyme catalyses UMP + ATP = UDP + ADP. The protein operates within pyrimidine metabolism; CTP biosynthesis via de novo pathway; UDP from UMP (UMPK route): step 1/1. Allosterically activated by GTP. Inhibited by UTP. Its function is as follows. Catalyzes the reversible phosphorylation of UMP to UDP. The sequence is that of Uridylate kinase from Shewanella loihica (strain ATCC BAA-1088 / PV-4).